We begin with the raw amino-acid sequence, 119 residues long: Large ribosomal subunit protein bL20c (119 aa).

The protein belongs to the bacterial ribosomal protein bL20 family.

The protein localises to the plastid. The protein resides in the chloroplast. In terms of biological role, binds directly to 23S ribosomal RNA and is necessary for the in vitro assembly process of the 50S ribosomal subunit. It is not involved in the protein synthesizing functions of that subunit. The polypeptide is Large ribosomal subunit protein bL20c (rpl20) (Pinus thunbergii (Japanese black pine)).